Here is a 379-residue protein sequence, read N- to C-terminus: UDP-4-amino-4-deoxy-L-arabinose--oxoglutarate aminotransferase (379 aa).

Lys-182 carries the N6-(pyridoxal phosphate)lysine modification.

The protein belongs to the DegT/DnrJ/EryC1 family. ArnB subfamily. As to quaternary structure, homodimer. Requires pyridoxal 5'-phosphate as cofactor.

The enzyme catalyses UDP-4-amino-4-deoxy-beta-L-arabinose + 2-oxoglutarate = UDP-beta-L-threo-pentopyranos-4-ulose + L-glutamate. Its pathway is nucleotide-sugar biosynthesis; UDP-4-deoxy-4-formamido-beta-L-arabinose biosynthesis; UDP-4-deoxy-4-formamido-beta-L-arabinose from UDP-alpha-D-glucuronate: step 2/3. The protein operates within bacterial outer membrane biogenesis; lipopolysaccharide biosynthesis. Catalyzes the conversion of UDP-4-keto-arabinose (UDP-Ara4O) to UDP-4-amino-4-deoxy-L-arabinose (UDP-L-Ara4N). The modified arabinose is attached to lipid A and is required for resistance to polymyxin and cationic antimicrobial peptides. This chain is UDP-4-amino-4-deoxy-L-arabinose--oxoglutarate aminotransferase, found in Salmonella paratyphi A (strain ATCC 9150 / SARB42).